Consider the following 113-residue polypeptide: Putative single-stranded DNA-binding protein ycf41 (113 aa).

The 101-residue stretch at 1-101 (MNYASFIIKI…EVSGFKIYPF (101 aa)) folds into the SSB domain.

It localises to the plastid. Its subcellular location is the chloroplast. This is Putative single-stranded DNA-binding protein ycf41 (ycf41) from Trieres chinensis (Marine centric diatom).